The chain runs to 398 residues: Tryptophan synthase beta chain (398 aa).

N6-(pyridoxal phosphate)lysine is present on Lys87.

This sequence belongs to the TrpB family. As to quaternary structure, tetramer of two alpha and two beta chains. It depends on pyridoxal 5'-phosphate as a cofactor.

The catalysed reaction is (1S,2R)-1-C-(indol-3-yl)glycerol 3-phosphate + L-serine = D-glyceraldehyde 3-phosphate + L-tryptophan + H2O. It functions in the pathway amino-acid biosynthesis; L-tryptophan biosynthesis; L-tryptophan from chorismate: step 5/5. In terms of biological role, the beta subunit is responsible for the synthesis of L-tryptophan from indole and L-serine. The polypeptide is Tryptophan synthase beta chain (Blochmanniella floridana).